The following is a 505-amino-acid chain: MFS-type transporter oryN (505 aa).

The disordered stretch occupies residues 1–54 (MAVAELPNIVSTDSSPSPHPGSRLSSEPTDIESQKAPSNAEPKTDPNLVTWDGP). The next 13 membrane-spanning stretches (helical) occupy residues 69 to 89 (AFVTAIWVYGNLCTCIASSIF), 106 to 126 (VVTLGISLFLLGYTVGPPVWG), 135 to 155 (KWPMVIGMALFTIFCIPVAVA), 166 to 186 (FLTGVFGAAPLSLVGGSLVDM), 193 to 213 (GVAMACCIGTIFGSPVLAPLM), 226 to 246 (FTQWLSCIMGGSCTVLVVFGL), 280 to 300 (GIKDIFVIFLLRPFALLVTEP), 301 to 321 (ILLLVTIYQAFIYGILYLVFV), 337 to 357 (ISALPYIGMMVGILIGCAIVV), 376 to 396 (LPLMIAGGCLLPVGLFIFAWT), 401 to 421 (IHWAGMVIGSAPVGTGMYMVF), 440 to 460 (IGANTFVRSFFGAGFPLFGPF), and 468 to 488 (AWASSTLGFISIAMIPIPVLF).

This sequence belongs to the major facilitator superfamily. CAR1 family.

It is found in the membrane. MFS-type transporter; part of the gene cluster that mediates the biosynthesis of oryzines, natural products with an unusual maleidride backbone. This Aspergillus oryzae (strain ATCC 42149 / RIB 40) (Yellow koji mold) protein is MFS-type transporter oryN.